Reading from the N-terminus, the 376-residue chain is Chaperone protein DnaJ 2 (376 aa).

Residues 5 to 70 (DYYEVLGVNR…QKRAAYDRYG (66 aa)) enclose the J domain. The CR-type zinc-finger motif lies at 135–213 (GADKTIRIPT…CGGAGRVKRQ (79 aa)). Residues C148, C151, C165, C168, C187, C190, C201, and C204 each contribute to the Zn(2+) site. CXXCXGXG motif repeat units lie at residues 148 to 155 (CETCHGSG), 165 to 172 (CPTCGGAG), 187 to 194 (CPKCHGTG), and 201 to 208 (CRDCGGAG).

Belongs to the DnaJ family. Homodimer. It depends on Zn(2+) as a cofactor.

It localises to the cytoplasm. Participates actively in the response to hyperosmotic and heat shock by preventing the aggregation of stress-denatured proteins and by disaggregating proteins, also in an autonomous, DnaK-independent fashion. Unfolded proteins bind initially to DnaJ; upon interaction with the DnaJ-bound protein, DnaK hydrolyzes its bound ATP, resulting in the formation of a stable complex. GrpE releases ADP from DnaK; ATP binding to DnaK triggers the release of the substrate protein, thus completing the reaction cycle. Several rounds of ATP-dependent interactions between DnaJ, DnaK and GrpE are required for fully efficient folding. Also involved, together with DnaK and GrpE, in the DNA replication of plasmids through activation of initiation proteins. This chain is Chaperone protein DnaJ 2, found in Aromatoleum aromaticum (strain DSM 19018 / LMG 30748 / EbN1) (Azoarcus sp. (strain EbN1)).